The following is a 445-amino-acid chain: uncharacterized protein (445 aa).

Positions 139-160 (TESQKDLEYERKANKTKEENQQ) are disordered.

This is an uncharacterized protein from Mycoplasma pneumoniae (strain ATCC 29342 / M129 / Subtype 1) (Mycoplasmoides pneumoniae).